The following is a 337-amino-acid chain: Ketol-acid reductoisomerase (NADP(+)) (337 aa).

Positions 1-180 (MFYEKDADVD…GGGKSGIIET (180 aa)) constitute a KARI N-terminal Rossmann domain. NADP(+) is bound by residues 22–25 (YGSQ), Arg-46, Ser-49, Ser-51, and 81–84 (DELQ). The active site involves His-106. Gly-132 is an NADP(+) binding site. Residues 181–326 (TFKDECETDL…AELRAMMPWI (146 aa)) enclose the KARI C-terminal knotted domain. Positions 189, 193, 225, and 229 each coordinate Mg(2+). Substrate is bound at residue Ser-250.

Belongs to the ketol-acid reductoisomerase family. Requires Mg(2+) as cofactor.

It catalyses the reaction (2R)-2,3-dihydroxy-3-methylbutanoate + NADP(+) = (2S)-2-acetolactate + NADPH + H(+). The catalysed reaction is (2R,3R)-2,3-dihydroxy-3-methylpentanoate + NADP(+) = (S)-2-ethyl-2-hydroxy-3-oxobutanoate + NADPH + H(+). Its pathway is amino-acid biosynthesis; L-isoleucine biosynthesis; L-isoleucine from 2-oxobutanoate: step 2/4. The protein operates within amino-acid biosynthesis; L-valine biosynthesis; L-valine from pyruvate: step 2/4. Involved in the biosynthesis of branched-chain amino acids (BCAA). Catalyzes an alkyl-migration followed by a ketol-acid reduction of (S)-2-acetolactate (S2AL) to yield (R)-2,3-dihydroxy-isovalerate. In the isomerase reaction, S2AL is rearranged via a Mg-dependent methyl migration to produce 3-hydroxy-3-methyl-2-ketobutyrate (HMKB). In the reductase reaction, this 2-ketoacid undergoes a metal-dependent reduction by NADPH to yield (R)-2,3-dihydroxy-isovalerate. The sequence is that of Ketol-acid reductoisomerase (NADP(+)) from Pelagibacter ubique (strain HTCC1062).